Here is a 538-residue protein sequence, read N- to C-terminus: Calcium-dependent protein kinase 32 (538 aa).

Positions 1 to 37 (MGNCCGTAGSLAQNDNKPKKGRKKQNPFSIDYGLHHG) are disordered. G2 carries the N-myristoyl glycine lipid modification. A Protein kinase domain is found at 63 to 321 (YTLGRELGRG…AQQVLDHPWL (259 aa)). ATP is bound by residues 69-77 (LGRGEFGVT) and K92. Catalysis depends on D187, which acts as the Proton acceptor. S227 carries the phosphoserine modification. Residues 327–357 (APNVSLGETVRARLKQFTVMNKLKKRALRVI) form an autoinhibitory domain region. 4 EF-hand domains span residues 364-399 (EEAS…LGHA), 400-435 (IPQD…LRKM), 436-470 (GNDE…DELG), and 471-506 (TSEE…GTDW). Ca(2+) is bound by residues D377, S379, K383, E388, D413, D415, D417, Y419, E424, D449, N451, N453, Y455, E460, D484, D486, D488, and R490. S492 carries the post-translational modification Phosphoserine. E495 provides a ligand contact to Ca(2+).

This sequence belongs to the protein kinase superfamily. Ser/Thr protein kinase family. CDPK subfamily. Interacts with ABF4. Interacts with CNGC18. Expressed in embryos and most of the vegetative tissues.

It localises to the nucleus. The protein localises to the membrane. It carries out the reaction L-seryl-[protein] + ATP = O-phospho-L-seryl-[protein] + ADP + H(+). It catalyses the reaction L-threonyl-[protein] + ATP = O-phospho-L-threonyl-[protein] + ADP + H(+). With respect to regulation, activated by calcium. Autophosphorylation may play an important role in the regulation of the kinase activity. Functionally, may play a role in signal transduction pathways that involve calcium as a second messenger. Involved in maintaining Ca2+ homeostasis in pollen tube tips by regulating CNGC18. Functions as regulator of the calcium-mediated abscisic acid (ABA) signaling pathway. Phosphorylates ABA-responsive transcription factor ABF4 in vitro. The sequence is that of Calcium-dependent protein kinase 32 from Arabidopsis thaliana (Mouse-ear cress).